A 163-amino-acid polypeptide reads, in one-letter code: MEHYRKAGSVELPAPSPMPQLPPDTLEMRVRAGSKIRNLLGLALERLEGGSARHVVFSGSGRAAGKAVSCAEIVKRRVPGLYQLTKLRFLQTEDSWVPTSPDTGLDPLTVRSHVPAVWVLLSRDPLDPNEYGYQPPGAPPDLGPTPASSCGPQPRRRARDTRF.

2 disordered regions span residues 1–22 and 129–163; these read MEHYRKAGSVELPAPSPMPQLP and NEYGYQPPGAPPDLGPTPASSCGPQPRRRARDTRF. Positions 154 to 163 are enriched in basic residues; it reads PRRRARDTRF.

This sequence belongs to the histone-like Alba family.

The protein resides in the nucleus. In terms of biological role, may be a component of ribonuclease P or MRP. The polypeptide is Ribonuclease P protein subunit p25-like protein (RPP25L) (Bos taurus (Bovine)).